Reading from the N-terminus, the 75-residue chain is U6-lycotoxin-Ls1c (75 aa).

The signal sequence occupies residues 1 to 21; that stretch reads MKLLLFTALVLVVISLIEVEA. Positions 22 to 25 are excised as a propeptide; sequence ENER. 4 disulfides stabilise this stretch: C27–C42, C34–C47, C41–C65, and C49–C63.

Belongs to the neurotoxin 19 (CSTX) family. 06 (U6-Lctx) subfamily. As to expression, expressed by the venom gland.

The protein resides in the secreted. The protein is U6-lycotoxin-Ls1c of Lycosa singoriensis (Wolf spider).